A 362-amino-acid chain; its full sequence is Patr class I histocompatibility antigen, A-5 alpha chain (362 aa).

The N-terminal stretch at 1–24 (MQVTAPRTVLLLLSAALALTETWA) is a signal peptide. Residues 25 to 114 (GSHSMKYFYT…LRGYYNQSEA (90 aa)) form an alpha-1 region. At 25–308 (GSHSMKYFYT…EPSSQSTIPI (284 aa)) the chain is on the extracellular side. The N-linked (GlcNAc...) asparagine glycan is linked to Asn110. The alpha-2 stretch occupies residues 115 to 206 (GSHIIQRMYG…ENGKETLQRA (92 aa)). 2 disulfides stabilise this stretch: Cys125–Cys188 and Cys227–Cys283. Positions 207 to 298 (DPPKTHVTHH…GLPKPLTLRW (92 aa)) are alpha-3. The Ig-like C1-type domain occupies 209-295 (PKTHVTHHPI…QHEGLPKPLT (87 aa)). The segment at 299–308 (EPSSQSTIPI) is connecting peptide. Residues 309–332 (VGIVAGLAVLAVVVIGAVVAAVMC) traverse the membrane as a helical segment. Over 333-362 (RRKSSGGKGGSYSQAASSDSAQGSDVSLTA) the chain is Cytoplasmic. The interval 336 to 362 (SSGGKGGSYSQAASSDSAQGSDVSLTA) is disordered. Position 343 is a phosphoserine (Ser343). Low complexity predominate over residues 343-362 (SYSQAASSDSAQGSDVSLTA). At Tyr344 the chain carries Phosphotyrosine. Phosphoserine occurs at positions 345, 349, 350, 352, 356, and 359.

Belongs to the MHC class I family. Heterodimer of an alpha chain and a beta chain (beta-2-microglobulin).

It localises to the membrane. In terms of biological role, involved in the presentation of foreign antigens to the immune system. This is Patr class I histocompatibility antigen, A-5 alpha chain from Pan troglodytes (Chimpanzee).